Here is a 560-residue protein sequence, read N- to C-terminus: Formate--tetrahydrofolate ligase (560 aa).

Thr-69 to Ser-76 lines the ATP pocket.

Belongs to the formate--tetrahydrofolate ligase family.

It catalyses the reaction (6S)-5,6,7,8-tetrahydrofolate + formate + ATP = (6R)-10-formyltetrahydrofolate + ADP + phosphate. It functions in the pathway one-carbon metabolism; tetrahydrofolate interconversion. The polypeptide is Formate--tetrahydrofolate ligase (Listeria monocytogenes serovar 1/2a (strain ATCC BAA-679 / EGD-e)).